A 67-amino-acid chain; its full sequence is Large ribosomal subunit protein bL32 (67 aa).

Positions 1–19 (MAVPKRKQSRANTHARRSQ) are enriched in basic residues. The disordered stretch occupies residues 1–20 (MAVPKRKQSRANTHARRSQW).

This sequence belongs to the bacterial ribosomal protein bL32 family.

This chain is Large ribosomal subunit protein bL32, found in Leifsonia xyli subsp. xyli (strain CTCB07).